We begin with the raw amino-acid sequence, 384 residues long: DNA repair protein RAD51 homolog 2 (384 aa).

The interaction with RAD51C stretch occupies residues 1-75 (MGSKKLKRVG…TAYGIKAQRS (75 aa)). 108-115 (GPPGCGKT) is an ATP binding site.

The protein belongs to the RecA family. RAD51 subfamily. In terms of assembly, part of the BCDX2 complex consisting of RAD51B, RAD51C, RAD51D and XRCC2; the complex has a ring-like structure arranged into a flat disc around a central channel. The BCDX2 subcomplex RAD51B:RAD51C interacts with RAD51. Interacts with SWSAP1; involved in homologous recombination repair. Interacts with HELQ. Phosphorylated on tyrosine residues by BCR-ABL. As to expression, expressed in a wide range of tissues.

Its subcellular location is the nucleus. Its function is as follows. Involved in the homologous recombination repair (HRR) pathway of double-stranded DNA breaks arising during DNA replication or induced by DNA-damaging agents. May promote the assembly of presynaptic RAD51 nucleoprotein filaments. Binds single-stranded DNA and double-stranded DNA and has DNA-dependent ATPase activity. Part of the RAD51 paralog protein complex BCDX2 which acts in the BRCA1-BRCA2-dependent HR pathway. Upon DNA damage, BCDX2 acts downstream of BRCA2 recruitment and upstream of RAD51 recruitment. BCDX2 binds predominantly to the intersection of the four duplex arms of the Holliday junction and to junction of replication forks. The BCDX2 complex was originally reported to bind single-stranded DNA, single-stranded gaps in duplex DNA and specifically to nicks in duplex DNA. The BCDX2 subcomplex RAD51B:RAD51C exhibits single-stranded DNA-dependent ATPase activity suggesting an involvement in early stages of the HR pathway. The sequence is that of DNA repair protein RAD51 homolog 2 (RAD51B) from Homo sapiens (Human).